Here is a 225-residue protein sequence, read N- to C-terminus: Uracil-DNA glycosylase (225 aa).

The active-site Proton acceptor is the Asp68.

It belongs to the uracil-DNA glycosylase (UDG) superfamily. UNG family.

It localises to the cytoplasm. The enzyme catalyses Hydrolyzes single-stranded DNA or mismatched double-stranded DNA and polynucleotides, releasing free uracil.. In terms of biological role, excises uracil residues from the DNA which can arise as a result of misincorporation of dUMP residues by DNA polymerase or due to deamination of cytosine. In Mycolicibacterium vanbaalenii (strain DSM 7251 / JCM 13017 / BCRC 16820 / KCTC 9966 / NRRL B-24157 / PYR-1) (Mycobacterium vanbaalenii), this protein is Uracil-DNA glycosylase.